The following is a 144-amino-acid chain: Large ribosomal subunit protein uL16 (144 aa).

Positions 1 to 19 (MLLPKRVKYRRQHRPKTTG) are enriched in basic residues. The tract at residues 1-23 (MLLPKRVKYRRQHRPKTTGRSKG) is disordered.

Belongs to the universal ribosomal protein uL16 family. As to quaternary structure, part of the 50S ribosomal subunit.

Its function is as follows. Binds 23S rRNA and is also seen to make contacts with the A and possibly P site tRNAs. The polypeptide is Large ribosomal subunit protein uL16 (Staphylococcus aureus (strain Mu50 / ATCC 700699)).